Here is a 186-residue protein sequence, read N- to C-terminus: Peptidyl-tRNA hydrolase (186 aa).

Tyr-14 is a binding site for tRNA. Residue His-19 is the Proton acceptor of the active site. TRNA is bound by residues Tyr-64, Asn-66, and Asn-112.

This sequence belongs to the PTH family. As to quaternary structure, monomer.

The protein resides in the cytoplasm. The catalysed reaction is an N-acyl-L-alpha-aminoacyl-tRNA + H2O = an N-acyl-L-amino acid + a tRNA + H(+). Hydrolyzes ribosome-free peptidyl-tRNAs (with 1 or more amino acids incorporated), which drop off the ribosome during protein synthesis, or as a result of ribosome stalling. Its function is as follows. Catalyzes the release of premature peptidyl moieties from peptidyl-tRNA molecules trapped in stalled 50S ribosomal subunits, and thus maintains levels of free tRNAs and 50S ribosomes. This is Peptidyl-tRNA hydrolase from Bacillus cytotoxicus (strain DSM 22905 / CIP 110041 / 391-98 / NVH 391-98).